Consider the following 650-residue polypeptide: Chaperone protein DnaK (650 aa).

Phosphothreonine; by autocatalysis is present on Thr-200.

This sequence belongs to the heat shock protein 70 family.

Its function is as follows. Acts as a chaperone. The sequence is that of Chaperone protein DnaK from Paraburkholderia phytofirmans (strain DSM 17436 / LMG 22146 / PsJN) (Burkholderia phytofirmans).